The chain runs to 802 residues: Leucine--tRNA ligase (802 aa).

The 'HIGH' region signature appears at 40-51 (PYPSGAGLHVGH). Residues 576–580 (KMSKS) carry the 'KMSKS' region motif. Lys579 contacts ATP.

It belongs to the class-I aminoacyl-tRNA synthetase family.

It is found in the cytoplasm. It catalyses the reaction tRNA(Leu) + L-leucine + ATP = L-leucyl-tRNA(Leu) + AMP + diphosphate. This chain is Leucine--tRNA ligase, found in Bacillus cereus (strain ATCC 10987 / NRS 248).